Consider the following 462-residue polypeptide: L-seryl-tRNA(Sec) selenium transferase (462 aa).

An N6-(pyridoxal phosphate)lysine modification is found at Lys-293.

Belongs to the SelA family. Pyridoxal 5'-phosphate is required as a cofactor.

The protein localises to the cytoplasm. The catalysed reaction is L-seryl-tRNA(Sec) + selenophosphate + H(+) = L-selenocysteinyl-tRNA(Sec) + phosphate. The protein operates within aminoacyl-tRNA biosynthesis; selenocysteinyl-tRNA(Sec) biosynthesis; selenocysteinyl-tRNA(Sec) from L-seryl-tRNA(Sec) (bacterial route): step 1/1. In terms of biological role, converts seryl-tRNA(Sec) to selenocysteinyl-tRNA(Sec) required for selenoprotein biosynthesis. This chain is L-seryl-tRNA(Sec) selenium transferase, found in Clostridium botulinum (strain ATCC 19397 / Type A).